A 178-amino-acid chain; its full sequence is ATP-dependent protease subunit HslV (178 aa).

The active site involves T7. 3 residues coordinate Na(+): G162, C165, and T168.

It belongs to the peptidase T1B family. HslV subfamily. As to quaternary structure, a double ring-shaped homohexamer of HslV is capped on each side by a ring-shaped HslU homohexamer. The assembly of the HslU/HslV complex is dependent on binding of ATP.

Its subcellular location is the cytoplasm. It catalyses the reaction ATP-dependent cleavage of peptide bonds with broad specificity.. Allosterically activated by HslU binding. Protease subunit of a proteasome-like degradation complex believed to be a general protein degrading machinery. The polypeptide is ATP-dependent protease subunit HslV (Cupriavidus necator (strain ATCC 17699 / DSM 428 / KCTC 22496 / NCIMB 10442 / H16 / Stanier 337) (Ralstonia eutropha)).